Consider the following 403-residue polypeptide: Acetate kinase (403 aa).

Mg(2+) is bound at residue Asn-8. Lys-15 lines the ATP pocket. A substrate-binding site is contributed by Arg-90. Asp-147 functions as the Proton donor/acceptor in the catalytic mechanism. Residues 207–211 (HLGSG), 282–284 (DLR), and 330–334 (GVGEN) each bind ATP. Residue Glu-384 participates in Mg(2+) binding.

This sequence belongs to the acetokinase family. As to quaternary structure, homodimer. It depends on Mg(2+) as a cofactor. Mn(2+) is required as a cofactor.

It localises to the cytoplasm. It catalyses the reaction acetate + ATP = acetyl phosphate + ADP. It functions in the pathway metabolic intermediate biosynthesis; acetyl-CoA biosynthesis; acetyl-CoA from acetate: step 1/2. Its function is as follows. Catalyzes the formation of acetyl phosphate from acetate and ATP. Can also catalyze the reverse reaction. This chain is Acetate kinase, found in Exiguobacterium sp. (strain ATCC BAA-1283 / AT1b).